The sequence spans 384 residues: Cyclohexane-1-carbonyl-CoA dehydrogenase (384 aa).

This sequence belongs to the acyl-CoA dehydrogenase family. In terms of assembly, homotetramer. It depends on FAD as a cofactor.

The catalysed reaction is cyclohexane-1-carbonyl-CoA + oxidized [electron-transfer flavoprotein] + H(+) = cyclohex-1-ene-1-carbonyl-CoA + reduced [electron-transfer flavoprotein]. Functionally, mediates the conversion of cyclohexane-1-carbonyl-CoA (ChCoA) into cyclohex-1-ene-1-carbonyl-CoA in biosynthesis of cyclohexane-1-carboxylate, a by-product produced during fermentation of benzoate and crotonate to acetate. This chain is Cyclohexane-1-carbonyl-CoA dehydrogenase, found in Syntrophus aciditrophicus (strain SB).